Reading from the N-terminus, the 229-residue chain is Flagellar brake protein YcgR (229 aa).

The PilZ domain occupies 134-218; it reads QLSLRVLDVS…GERALQRYID (85 aa).

It belongs to the YcgR family. Monomer. Interacts with the flagellar basal bodies.

The protein resides in the bacterial flagellum basal body. Acts as a flagellar brake, regulating swimming and swarming in a bis-(3'-5') cyclic diguanylic acid (c-di-GMP)-dependent manner. Binds 1 c-di-GMP dimer per subunit. Increasing levels of c-di-GMP lead to decreased motility. The polypeptide is Flagellar brake protein YcgR (Methylibium petroleiphilum (strain ATCC BAA-1232 / LMG 22953 / PM1)).